Consider the following 194-residue polypeptide: Holliday junction branch migration complex subunit RuvA (194 aa).

The domain I stretch occupies residues 1 to 64; the sequence is MIGRLRGILA…EDSVSLYGFL (64 aa). The interval 65–140 is domain II; sequence REGERRLFRD…RAADFSSGAP (76 aa). The interval 140–144 is flexible linker; it reads PITGQ. Residues 145-194 form a domain III region; the sequence is LGPDAISEATVALQQLGYKPAEAARMARDAGAEGGEVATVIRKALQAALR.

This sequence belongs to the RuvA family. In terms of assembly, homotetramer. Forms an RuvA(8)-RuvB(12)-Holliday junction (HJ) complex. HJ DNA is sandwiched between 2 RuvA tetramers; dsDNA enters through RuvA and exits via RuvB. An RuvB hexamer assembles on each DNA strand where it exits the tetramer. Each RuvB hexamer is contacted by two RuvA subunits (via domain III) on 2 adjacent RuvB subunits; this complex drives branch migration. In the full resolvosome a probable DNA-RuvA(4)-RuvB(12)-RuvC(2) complex forms which resolves the HJ.

It is found in the cytoplasm. Functionally, the RuvA-RuvB-RuvC complex processes Holliday junction (HJ) DNA during genetic recombination and DNA repair, while the RuvA-RuvB complex plays an important role in the rescue of blocked DNA replication forks via replication fork reversal (RFR). RuvA specifically binds to HJ cruciform DNA, conferring on it an open structure. The RuvB hexamer acts as an ATP-dependent pump, pulling dsDNA into and through the RuvAB complex. HJ branch migration allows RuvC to scan DNA until it finds its consensus sequence, where it cleaves and resolves the cruciform DNA. The sequence is that of Holliday junction branch migration complex subunit RuvA from Xanthomonas oryzae pv. oryzae (strain MAFF 311018).